A 231-amino-acid chain; its full sequence is 26S proteasome non-ATPase regulatory subunit 10 (231 aa).

7 ANK repeats span residues Gly-3 to Thr-36, Asp-37 to Lys-69, Asp-70 to Val-102, Asn-103 to Lys-135, Asp-136 to Gln-168, Asp-169 to Glu-201, and Asn-202 to Ser-226.

As to quaternary structure, part of transient complex containing PSMD10, PSMC4, PSMC5 and PAAF1 formed during the assembly of the 26S proteasome. Stays associated throughout the assembly of the PA700/19S RC and is released upon association with the 20S core. Interacts with PSMC4. Interacts with RB1. Interacts with CDK4. Interacts with MDM2. Interacts with RELA. Associates with a CDK4:CCND2 serine/threonine kinase complex. Interacts with ARHGDIA and increases the interaction between ARHGDIA and RHOA, hence promotes ARHGDIA inactivation of RHOA and ROCK.

Its subcellular location is the cytoplasm. The protein localises to the nucleus. Its function is as follows. Acts as a chaperone during the assembly of the 26S proteasome, specifically of the PA700/19S regulatory complex (RC). In the initial step of the base subcomplex assembly is part of an intermediate PSMD10:PSMC4:PSMC5:PAAF1 module which probably assembles with a PSMD5:PSMC2:PSMC1:PSMD2 module. Independently of the proteasome, regulates EGF-induced AKT activation through inhibition of the RHOA/ROCK/PTEN pathway, leading to prolonged AKT activation. Plays an important role in RAS-induced tumorigenesis. In terms of biological role, acts as an oncoprotein by being involved in negative regulation of tumor suppressors RB1 and p53/TP53. Overexpression is leading to phosphorylation of RB1 and proteasomal degradation of RB1. Regulates CDK4-mediated phosphorylation of RB1 by competing with CDKN2A for binding with CDK4. Facilitates binding of MDM2 to p53/TP53 and the mono- and polyubiquitination of p53/TP53 by MDM2 suggesting a function in targeting the TP53:MDM2 complex to the 26S proteasome. Involved in p53-independent apoptosis. Involved in regulation of NF-kappa-B by retaining it in the cytoplasm. Binds to the NF-kappa-B component RELA and accelerates its XPO1/CRM1-mediated nuclear export. This is 26S proteasome non-ATPase regulatory subunit 10 (Psmd10) from Mus musculus (Mouse).